The primary structure comprises 1167 residues: DNA-directed RNA polymerase subunit beta (1167 aa).

It belongs to the RNA polymerase beta chain family. In terms of assembly, the RNAP catalytic core consists of 2 alpha, 1 beta, 1 beta' and 1 omega subunit. When a sigma factor is associated with the core the holoenzyme is formed, which can initiate transcription.

The enzyme catalyses RNA(n) + a ribonucleoside 5'-triphosphate = RNA(n+1) + diphosphate. In terms of biological role, DNA-dependent RNA polymerase catalyzes the transcription of DNA into RNA using the four ribonucleoside triphosphates as substrates. This Treponema denticola (strain ATCC 35405 / DSM 14222 / CIP 103919 / JCM 8153 / KCTC 15104) protein is DNA-directed RNA polymerase subunit beta.